Consider the following 340-residue polypeptide: Glycerol-3-phosphate dehydrogenase [NAD(P)+] (340 aa).

Ser-12, Trp-13, Lys-34, and Lys-107 together coordinate NADPH. Positions 107, 138, and 140 each coordinate sn-glycerol 3-phosphate. Ala-142 is a binding site for NADPH. Residues Lys-193, Asp-246, Ser-256, Arg-257, and Asn-258 each contribute to the sn-glycerol 3-phosphate site. Residue Lys-193 is the Proton acceptor of the active site. Arg-257 provides a ligand contact to NADPH. NADPH-binding residues include Ile-281 and Glu-283.

Belongs to the NAD-dependent glycerol-3-phosphate dehydrogenase family.

The protein localises to the cytoplasm. It catalyses the reaction sn-glycerol 3-phosphate + NAD(+) = dihydroxyacetone phosphate + NADH + H(+). It carries out the reaction sn-glycerol 3-phosphate + NADP(+) = dihydroxyacetone phosphate + NADPH + H(+). Its pathway is membrane lipid metabolism; glycerophospholipid metabolism. Functionally, catalyzes the reduction of the glycolytic intermediate dihydroxyacetone phosphate (DHAP) to sn-glycerol 3-phosphate (G3P), the key precursor for phospholipid synthesis. This Enterococcus faecalis (strain ATCC 700802 / V583) protein is Glycerol-3-phosphate dehydrogenase [NAD(P)+].